The chain runs to 838 residues: Phosphatidylethanolamine N-methyltransferase 1 (838 aa).

At 1–48 the chain is on the lumenal side; the sequence is MATEIITEKKEIVARTRSSGITFNPPVTHDMVRSLFDPTIKKSFLECC. Residues 49 to 69 traverse the membrane as a helical segment; that stretch reads ITLTILANFVLCYYLINWFGL. Residues 70–73 are Cytoplasmic-facing; sequence SQAK. Residues 74–94 form a helical membrane-spanning segment; sequence LIFLIQYVYWRLAYNLGIGII. The Lumenal portion of the chain corresponds to 95–157; sequence LHYQSHYESL…ELNCWLLFRQ (63 aa). Residues 158 to 178 traverse the membrane as a helical segment; the sequence is FVDLILMQDFTTYIIYVYLSL. Residues 179–184 are Cytoplasmic-facing; sequence PTDVSS. The chain crosses the membrane as a helical span at residues 185–205; the sequence is LINWKSLIGIAMILFNIWVKI. The Lumenal segment spans residues 206 to 236; the sequence is DAHRVVKDYAWYWGDFFFLQDAELTFDGVFN. A helical membrane pass occupies residues 237–257; it reads ISPHPMYSIGYLGYYGLSLIC. Topologically, residues 258–261 are cytoplasmic; it reads GDYR. The chain crosses the membrane as a helical span at residues 262 to 282; that stretch reads VLLVSVGGHFLQFLFLKYVES. Over 283-328 the chain is Lumenal; sequence PHIERTYGSDSPSNSTQHQIDDLIAKENYDYSRPLINTGILFENFQ. Residues 329–349 form a helical membrane-spanning segment; the sequence is FLRFSDYFTVSTILVLFSWFF. Residues 350–356 lie on the Cytoplasmic side of the membrane; the sequence is TSKPSNN. A helical membrane pass occupies residues 357 to 377; it reads FLFVLTLLTKLTTWLLTSWIL. Residues 378 to 403 lie on the Lumenal side of the membrane; it reads FQQSNRKWFTRLFLKNGYTQIYSYQQ. The helical transmembrane segment at 404–424 threads the bilayer; sequence WQFLYNYSLIVTNTLLFLHTL. Over 425–435 the chain is Cytoplasmic; sequence SELYSIQSSDG. A helical transmembrane segment spans residues 436-456; the sequence is LNNSHVIFGLLLCAIQIWCNV. The Lumenal portion of the chain corresponds to 457–517; it reads ETRDAISDFG…VLMTNFSKTN (61 aa). Residues 518 to 538 form a helical membrane-spanning segment; the sequence is VTLAVLWTVTNLIFVKLIEEP. The Cytoplasmic portion of the chain corresponds to 539 to 838; it reads HVSKVYGNGT…DIKEVLDSLN (300 aa).

Belongs to the class VI-like SAM-binding methyltransferase superfamily. CHO2 family.

The protein localises to the endoplasmic reticulum membrane. It carries out the reaction a 1,2-diacyl-sn-glycero-3-phosphoethanolamine + S-adenosyl-L-methionine = a 1,2-diacyl-sn-glycero-3-phospho-N-methylethanolamine + S-adenosyl-L-homocysteine + H(+). It functions in the pathway phospholipid metabolism; phosphatidylcholine biosynthesis. Catalyzes the first step of the methylation pathway of phosphatidylcholine biosynthesis, the SAM-dependent methylation of phosphatidylethanolamine (PE) to phosphatidylmonomethylethanolamine (PMME). In Vanderwaltozyma polyspora (strain ATCC 22028 / DSM 70294 / BCRC 21397 / CBS 2163 / NBRC 10782 / NRRL Y-8283 / UCD 57-17) (Kluyveromyces polysporus), this protein is Phosphatidylethanolamine N-methyltransferase 1 (CHO2-1).